The following is a 206-amino-acid chain: Large ribosomal subunit protein uL3 (206 aa).

The interval 126-155 (HGHAGGPGAHGSRFHRHPGSMGANSTPSRV) is disordered.

Belongs to the universal ribosomal protein uL3 family. As to quaternary structure, part of the 50S ribosomal subunit. Forms a cluster with proteins L14 and L19.

One of the primary rRNA binding proteins, it binds directly near the 3'-end of the 23S rRNA, where it nucleates assembly of the 50S subunit. In Leptospira interrogans serogroup Icterohaemorrhagiae serovar copenhageni (strain Fiocruz L1-130), this protein is Large ribosomal subunit protein uL3.